The primary structure comprises 194 residues: Ribosomal RNA small subunit methyltransferase G (194 aa).

Residues G70, Y75, 121–122, and R135 contribute to the S-adenosyl-L-methionine site; that span reads VE.

The protein belongs to the methyltransferase superfamily. RNA methyltransferase RsmG family.

Its subcellular location is the cytoplasm. The catalysed reaction is guanosine(527) in 16S rRNA + S-adenosyl-L-methionine = N(7)-methylguanosine(527) in 16S rRNA + S-adenosyl-L-homocysteine. Functionally, specifically methylates the N7 position of guanine in position 527 of 16S rRNA. The polypeptide is Ribosomal RNA small subunit methyltransferase G (Aliarcobacter butzleri (strain RM4018) (Arcobacter butzleri)).